Reading from the N-terminus, the 580-residue chain is TRAF-type zinc finger domain-containing protein 1 (580 aa).

At A2 the chain carries N-acetylalanine. The TRAF-type zinc finger occupies I27 to K103. 10 positions are modified to phosphoserine: S278, S320, S326, S327, S409, S415, S430, S450, S469, and S532. Disordered regions lie at residues T395 to R453, P468 to H509, and F524 to E580. Residues Q407–E417 are compositionally biased toward polar residues.

As to quaternary structure, interacts with MAVS, TICAM1, TRAF1, TRAF2, TRAF3 and TRAF6. As to expression, expressed in skeletal muscle, brain, liver, kidney, spleen and bone marrow. Expression depends on STAT1.

In terms of biological role, negative feedback regulator that controls excessive innate immune responses. Regulates both Toll-like receptor 4 (TLR4) and DDX58/RIG1-like helicases (RLH) pathways. May inhibit the LTR pathway by direct interaction with TRAF6 and attenuation of NF-kappa-B activation. May negatively regulate the RLH pathway downstream from MAVS and upstream of NF-kappa-B and IRF3. The sequence is that of TRAF-type zinc finger domain-containing protein 1 (Trafd1) from Mus musculus (Mouse).